Here is a 434-residue protein sequence, read N- to C-terminus: Protein maelstrom homolog (434 aa).

A DNA-binding region (HMG box) is located at residues 4-73 (RKASRNAYYF…AQGKDSGPSE (70 aa)). 2 disordered regions span residues 62-94 (RAAQGKDSGPSEKQKPVFTPLRKPGMLVPKQNV) and 357-385 (SHFNSANQEQRSNTPIGDYPSRAKISGQN). The segment covering 357–371 (SHFNSANQEQRSNTP) has biased composition (polar residues).

Belongs to the maelstrom family. As to quaternary structure, interacts with SMARCB1, SIN3B and DDX4. Interacts with piRNA-associated proteins TDRD1, PIWIL1 and PIWIL2. Interacts with TEX19.

Its subcellular location is the cytoplasm. It is found in the nucleus. Functionally, plays a central role during spermatogenesis by repressing transposable elements and preventing their mobilization, which is essential for the germline integrity. Acts via the piRNA metabolic process, which mediates the repression of transposable elements during meiosis by forming complexes composed of piRNAs and Piwi proteins and governs the methylation and subsequent repression of transposons. Its association with piP-bodies suggests a participation in the secondary piRNAs metabolic process. Required for the localization of germ-cell factors to the meiotic nuage. This is Protein maelstrom homolog (MAEL) from Macaca fascicularis (Crab-eating macaque).